The sequence spans 149 residues: UPF0336 protein CMM_2793 (149 aa).

The MaoC-like domain maps to 16-117 (APYLVGREKV…TVTKVATLGG (102 aa)).

Belongs to the UPF0336 family.

This chain is UPF0336 protein CMM_2793, found in Clavibacter michiganensis subsp. michiganensis (strain NCPPB 382).